The sequence spans 102 residues: Spexin prohormone 1 (102 aa).

An N-terminal signal peptide occupies residues 1-26 (MKDLRTLAAYALALLLLATFVSHSWS). Residues 27–35 (APKGSFQRR) constitute a propeptide that is removed on maturation. A Glutamine amide modification is found at glutamine 49. The propeptide occupies 50–102 (GRRFVSEDRNEGDLYDTIRLESRSQNTENLSISKAAAFLLNILQQARDEDEPY).

This sequence belongs to the spexin family. As to expression, mainly expressed in the brain and ovary. Detected bilaterally in the adult brainstem. Expressed in neurons in the dorsal habenula (dHb). In the dHb some neurons project into the interpeduncular nucleus (IPN) where expression often overlaps with galr2a and galr2b. Weakly expressed in the liver, intestine, kidney, heart and gill.

The protein localises to the secreted. It localises to the extracellular space. Its subcellular location is the cytoplasmic vesicle. The protein resides in the secretory vesicle. In terms of biological role, plays a role in the regulation of food intake and energy metabolism. May also be involved in suppressing the anxiety response by promoting the expression of serotonin-related genes such as fev, tph2 and slc6a4a. Acts as a ligand for galanin receptors galr2a and galr2b. Brain administration of the peptide inhibits food consumption and elevates levels of glucose, triacylglycerol and cholesterol in the serum. Likely to control food intake by regulating appetite related genes which includes the negative regulation of the orexigenic factor agrp. By controlling food intake it may act as a satiety factor in energy metabolism. The protein is Spexin prohormone 1 (spx) of Danio rerio (Zebrafish).